The sequence spans 274 residues: 2-dehydro-3-deoxyphosphooctonate aldolase (274 aa).

It belongs to the KdsA family.

The protein resides in the cytoplasm. It catalyses the reaction D-arabinose 5-phosphate + phosphoenolpyruvate + H2O = 3-deoxy-alpha-D-manno-2-octulosonate-8-phosphate + phosphate. Its pathway is carbohydrate biosynthesis; 3-deoxy-D-manno-octulosonate biosynthesis; 3-deoxy-D-manno-octulosonate from D-ribulose 5-phosphate: step 2/3. It functions in the pathway bacterial outer membrane biogenesis; lipopolysaccharide biosynthesis. The sequence is that of 2-dehydro-3-deoxyphosphooctonate aldolase from Legionella pneumophila (strain Corby).